Consider the following 335-residue polypeptide: Holliday junction branch migration complex subunit RuvB (335 aa).

The segment at 4 to 183 is large ATPase domain (RuvB-L); the sequence is ADNLNVTSII…FGIVQRLEFY (180 aa). ATP contacts are provided by residues R23, G64, K67, T68, T69, 130–132, R173, Y183, and R220; that span reads EDY. T68 contacts Mg(2+). Residues 184 to 254 are small ATPAse domain (RuvB-S); it reads PTKDLQNIIS…VAMNALNMLN (71 aa). Positions 257–335 are head domain (RuvB-H); sequence TAGFNFMDRQ…HFSLKQSRDI (79 aa). R293, R312, and R317 together coordinate DNA.

This sequence belongs to the RuvB family. As to quaternary structure, homohexamer. Forms an RuvA(8)-RuvB(12)-Holliday junction (HJ) complex. HJ DNA is sandwiched between 2 RuvA tetramers; dsDNA enters through RuvA and exits via RuvB. An RuvB hexamer assembles on each DNA strand where it exits the tetramer. Each RuvB hexamer is contacted by two RuvA subunits (via domain III) on 2 adjacent RuvB subunits; this complex drives branch migration. In the full resolvosome a probable DNA-RuvA(4)-RuvB(12)-RuvC(2) complex forms which resolves the HJ.

The protein resides in the cytoplasm. It carries out the reaction ATP + H2O = ADP + phosphate + H(+). Functionally, the RuvA-RuvB-RuvC complex processes Holliday junction (HJ) DNA during genetic recombination and DNA repair, while the RuvA-RuvB complex plays an important role in the rescue of blocked DNA replication forks via replication fork reversal (RFR). RuvA specifically binds to HJ cruciform DNA, conferring on it an open structure. The RuvB hexamer acts as an ATP-dependent pump, pulling dsDNA into and through the RuvAB complex. RuvB forms 2 homohexamers on either side of HJ DNA bound by 1 or 2 RuvA tetramers; 4 subunits per hexamer contact DNA at a time. Coordinated motions by a converter formed by DNA-disengaged RuvB subunits stimulates ATP hydrolysis and nucleotide exchange. Immobilization of the converter enables RuvB to convert the ATP-contained energy into a lever motion, pulling 2 nucleotides of DNA out of the RuvA tetramer per ATP hydrolyzed, thus driving DNA branch migration. The RuvB motors rotate together with the DNA substrate, which together with the progressing nucleotide cycle form the mechanistic basis for DNA recombination by continuous HJ branch migration. Branch migration allows RuvC to scan DNA until it finds its consensus sequence, where it cleaves and resolves cruciform DNA. In Baumannia cicadellinicola subsp. Homalodisca coagulata, this protein is Holliday junction branch migration complex subunit RuvB.